The chain runs to 553 residues: Interleukin-20 receptor subunit alpha (553 aa).

A signal peptide spans Met-1–Ala-29. Residues Val-30 to Lys-250 are Extracellular-facing. 2 Fibronectin type-III domains span residues Leu-37–Thr-135 and Gln-136–Asp-242. N-linked (GlcNAc...) asparagine glycans are attached at residues Asn-42, Asn-83, Asn-91, Asn-182, Asn-191, and Asn-200. The cysteines at positions 87 and 95 are disulfide-linked. A disulfide bond links Cys-215 and Cys-236. Residues Ile-251–Tyr-271 traverse the membrane as a helical segment. Residues Ser-272–Asn-553 are Cytoplasmic-facing. Disordered regions lie at residues Ser-333–Glu-353 and Gln-462–Glu-515. The span at Ser-334–Gly-346 shows a compositional bias: polar residues. The span at Gln-499 to Gly-513 shows a compositional bias: acidic residues.

This sequence belongs to the type II cytokine receptor family. Heterodimer with IL20RB and heterodimer with IL10RB. Widely expressed with highest levels in skin and testis and high levels in brain. Highly expressed in psoriatic skin.

The protein resides in the membrane. The IL20RA/IL20RB dimer is a receptor for IL19, IL20 and IL24. The IL20RA/IL10RB dimer is a receptor for IL26. This Homo sapiens (Human) protein is Interleukin-20 receptor subunit alpha (IL20RA).